Reading from the N-terminus, the 528-residue chain is Adhesion G-protein coupled receptor G5 (528 aa).

Residues 1-21 form the signal peptide; it reads MDHCGALFLCLCLLTLQNATT. At 22-245 the chain is on the extracellular side; sequence ETWEELLSYM…SPALVPAELL (224 aa). 6 N-linked (GlcNAc...) asparagine glycosylation sites follow: Asn58, Asn65, Asn146, Asn147, Asn173, and Asn179. Residues 78-239 enclose the GAIN-B domain; that stretch reads FKLSCDFSGL…AVLMQLSPAL (162 aa). Intrachain disulfides connect Cys189–Cys221 and Cys209–Cys223. Residues 189-239 are GPS; it reads CVFWKEGARKQPWGGWSPEGCRTEQPSHSQVLCRCNHLTYFAVLMQLSPAL. The stachel stretch occupies residues 228–236; that stretch reads YFAVLMQLS. Residues 246 to 271 traverse the membrane as a helical segment; sequence APLTYISLVGCSISIVASLITVLLHF. Residues 272–280 lie on the Cytoplasmic side of the membrane; it reads HFRKQSDSL. The helical transmembrane segment at 281–304 threads the bilayer; sequence TRIHMNLHASVLLLNIAFLLSPAF. Topologically, residues 305–314 are extracellular; sequence AMSPVPGSAC. Cys314 and Cys404 are oxidised to a cystine. Residues 315 to 340 traverse the membrane as a helical segment; sequence TALAAALHYALLSCLTWMAIEGFNLY. Topologically, residues 341 to 353 are cytoplasmic; the sequence is LLLGRVYNIYIRR. The chain crosses the membrane as a helical span at residues 354 to 377; that stretch reads YVFKLGVLGWGAPALLVLLSLSVK. Over 378–410 the chain is Extracellular; sequence SSVYGPCTIPVFDSWENGTGFQNMSICWVRSPV. 2 N-linked (GlcNAc...) asparagine glycosylation sites follow: Asn394 and Asn400. The helical transmembrane segment at 411–435 threads the bilayer; sequence VHSVLVMGYGGLTSLFNLVVLAWAL. The Cytoplasmic segment spans residues 436-455; it reads WTLRRLRERADAPSVRACHD. The chain crosses the membrane as a helical span at residues 456–477; sequence TVTVLGLTVLLGTTWALAFFSF. Residues 478–481 lie on the Extracellular side of the membrane; the sequence is GVFL. The helical transmembrane segment at 482 to 505 threads the bilayer; it reads LPQLFLFTILNSLYGFFLFLWFCS. The Cytoplasmic segment spans residues 506 to 528; it reads QRCRSEAEAKAQIEAFSSSQTTQ.

Belongs to the G-protein coupled receptor 2 family. Adhesion G-protein coupled receptor (ADGR) subfamily. In terms of assembly, heterodimer of 2 chains generated by proteolytic processing; the large extracellular N-terminal fragment and the membrane-bound C-terminal fragment predominantly remain associated and non-covalently linked. Autoproteolytically processed at the GPS region of the GAIN-B domain; this cleavage modulates receptor activity. Post-translationally, N-glycsylated. In terms of tissue distribution, expressed in immune cells. Primarily found in granulocytes. Found in eosinophils.

Its subcellular location is the cell membrane. Its activity is regulated as follows. Forms a heterodimer of 2 chains generated by proteolytic processing that remain associated through non-covalent interactions mediated by the GAIN-B domain. In the inactivated receptor, the Stachel sequence (also named stalk) is embedded in the GAIN-B domain, where it adopts a beta-strand conformation. On activation, the Stachel moves into the 7 transmembrane region and adopts a twisted hook-shaped configuration that forms contacts within the receptor, leading to coupling of a G-alpha protein, which activates signaling. The cleaved GAIN-B and N-terminal domains can then dissociate from the rest of the receptor. Functionally, orphan adhesion G-protein coupled receptor (aGPCR). Ligand binding causes a conformation change that triggers signaling via guanine nucleotide-binding proteins (G proteins) and modulates the activity of downstream effectors, such as adenylate cyclase. ADGRG5 is specifically coupled to G(s) G proteins and mediates activation of adenylate cyclase activity. The sequence is that of Adhesion G-protein coupled receptor G5 from Homo sapiens (Human).